A 673-amino-acid chain; its full sequence is Polygalacturonate 4-alpha-galacturonosyltransferase (673 aa).

Over 1–22 the chain is Cytoplasmic; sequence MALKRGLSGVNRIRGSGGGSRS. The helical; Signal-anchor for type II membrane protein transmembrane segment at 23 to 43 threads the bilayer; that stretch reads VLVLLIFFCVFAPLCFFVGRG. Over 44–673 the chain is Lumenal; that stretch reads VYIDSSNDYS…PYLRRCNLHE (630 aa). N103 carries an N-linked (GlcNAc...) asparagine glycan. Positions 112 to 136 are disordered; it reads GVDPSFRHSENPATPDVKSNNLNEK. N-linked (GlcNAc...) asparagine glycans are attached at residues N382, N434, N538, and N585.

This sequence belongs to the glycosyltransferase 8 family. In terms of tissue distribution, expressed in seedlings, inflorescences, flowers, siliques, pollen, roots, stems and leaves.

The protein localises to the golgi apparatus membrane. It catalyses the reaction [(1-&gt;4)-alpha-D-galacturonosyl](n) + UDP-alpha-D-galacturonate = [(1-&gt;4)-alpha-D-galacturonosyl](n+1) + UDP + H(+). It participates in glycan metabolism; pectin biosynthesis. Functionally, involved in pectin biosynthesis. Catalyzes the transfer of galacturonic acid from uridine 5'-diphosphogalacturonic acid onto the pectic polysaccharide homogalacturonan. The polypeptide is Polygalacturonate 4-alpha-galacturonosyltransferase (GAUT1) (Arabidopsis thaliana (Mouse-ear cress)).